Here is a 638-residue protein sequence, read N- to C-terminus: Chaperone protein DnaK (638 aa).

T198 carries the phosphothreonine; by autocatalysis modification. Residues 598-638 (YEASQKEAAEADAKADAAKDSDVVDADFEEIDEDDDKKKSA) are disordered. Positions 601 to 619 (SQKEAAEADAKADAAKDSD) are enriched in basic and acidic residues. Residues 620–632 (VVDADFEEIDEDD) are compositionally biased toward acidic residues.

Belongs to the heat shock protein 70 family.

In terms of biological role, acts as a chaperone. The protein is Chaperone protein DnaK of Mesorhizobium japonicum (strain LMG 29417 / CECT 9101 / MAFF 303099) (Mesorhizobium loti (strain MAFF 303099)).